A 346-amino-acid chain; its full sequence is 4-hydroxy-2-oxohexanoate aldolase (346 aa).

Positions Val-7 to Ala-259 constitute a Pyruvate carboxyltransferase domain. Arg-15–Asp-16 serves as a coordination point for substrate. Asp-16 is a Mn(2+) binding site. Residue His-19 is the Proton acceptor of the active site. Residues Ser-169 and His-198 each contribute to the substrate site. The Mn(2+) site is built by His-198 and His-200. Tyr-289 lines the substrate pocket.

This sequence belongs to the 4-hydroxy-2-oxovalerate aldolase family. In terms of assembly, homodimer. Forms a heterotetramer composed of two aldolase (HsaF) and two dehydrogenase (HsaG) subunits. Requires Mn(2+) as cofactor.

It catalyses the reaction (S)-4-hydroxy-2-oxohexanoate = propanal + pyruvate. The enzyme catalyses (S)-4-hydroxy-2-oxopentanoate = acetaldehyde + pyruvate. Functionally, involved in cholesterol degradation. Catalyzes the retro-aldol cleavage of 4-hydroxy-2-oxohexanoate (HOHA) to pyruvate and propanal. Can also catalyze the cleavage of 4-hydroxy-2-oxopentanoate (HOPA) to pyruvate and acetaldehyde. The aldehydes produced by this reaction are directly channeled to the dehydrogenase HsaG. This Mycobacterium bovis (strain ATCC BAA-935 / AF2122/97) protein is 4-hydroxy-2-oxohexanoate aldolase.